We begin with the raw amino-acid sequence, 615 residues long: Zinc finger protein 181 (615 aa).

Positions 48 to 120 (VTFSDVAIDF…EKKLSKGLIP (73 aa)) constitute a KRAB domain. Glycyl lysine isopeptide (Lys-Gly) (interchain with G-Cter in SUMO2) cross-links involve residues Lys153 and Lys170. C2H2-type zinc fingers lie at residues 281 to 303 (YTCS…WRIH), 309 to 331 (YECR…LISH), 337 to 359 (YKCI…QSTH), 365 to 387 (YECM…LRIH), 393 to 415 (YECR…QKIH), 421 to 443 (YECR…QRIH), 449 to 471 (YECN…QSIH), 477 to 499 (FECQ…LRNH), 505 to 527 (YECS…HRIH), 533 to 555 (YECI…QRIH), and 561 to 583 (YKCN…QRVH).

This sequence belongs to the krueppel C2H2-type zinc-finger protein family.

The protein resides in the nucleus. Functionally, may be involved in transcriptional regulation. This Pongo abelii (Sumatran orangutan) protein is Zinc finger protein 181 (ZNF181).